We begin with the raw amino-acid sequence, 343 residues long: N-acetyl-gamma-glutamyl-phosphate reductase (343 aa).

C147 is a catalytic residue.

This sequence belongs to the NAGSA dehydrogenase family. Type 1 subfamily.

The protein resides in the cytoplasm. It carries out the reaction N-acetyl-L-glutamate 5-semialdehyde + phosphate + NADP(+) = N-acetyl-L-glutamyl 5-phosphate + NADPH + H(+). It functions in the pathway amino-acid biosynthesis; L-arginine biosynthesis; N(2)-acetyl-L-ornithine from L-glutamate: step 3/4. Its function is as follows. Catalyzes the NADPH-dependent reduction of N-acetyl-5-glutamyl phosphate to yield N-acetyl-L-glutamate 5-semialdehyde. The sequence is that of N-acetyl-gamma-glutamyl-phosphate reductase from Listeria monocytogenes serotype 4b (strain F2365).